The primary structure comprises 177 residues: Adenine phosphoribosyltransferase (177 aa).

The protein belongs to the purine/pyrimidine phosphoribosyltransferase family. As to quaternary structure, homodimer.

The protein localises to the cytoplasm. The enzyme catalyses AMP + diphosphate = 5-phospho-alpha-D-ribose 1-diphosphate + adenine. The protein operates within purine metabolism; AMP biosynthesis via salvage pathway; AMP from adenine: step 1/1. Catalyzes a salvage reaction resulting in the formation of AMP, that is energically less costly than de novo synthesis. The chain is Adenine phosphoribosyltransferase from Chlorobium luteolum (strain DSM 273 / BCRC 81028 / 2530) (Pelodictyon luteolum).